We begin with the raw amino-acid sequence, 376 residues long: Flagellin B (376 aa).

Positions Ser103–Thr130 form a coiled coil.

This sequence belongs to the bacterial flagellin family. As to quaternary structure, heteromer of multiple flagellin subunits including FlaA, FlaB, FlaC, FlaD and possibly FlaE.

It is found in the secreted. Its subcellular location is the bacterial flagellum. In terms of biological role, flagellin is the subunit protein which polymerizes to form the filaments of bacterial flagella. FlaB is not essential for flagellar synthesis and motility. The chain is Flagellin B (flaB) from Vibrio anguillarum (Listonella anguillarum).